A 353-amino-acid chain; its full sequence is S-adenosylmethionine:tRNA ribosyltransferase-isomerase (353 aa).

The protein belongs to the QueA family. In terms of assembly, monomer.

It is found in the cytoplasm. It carries out the reaction 7-aminomethyl-7-carbaguanosine(34) in tRNA + S-adenosyl-L-methionine = epoxyqueuosine(34) in tRNA + adenine + L-methionine + 2 H(+). The protein operates within tRNA modification; tRNA-queuosine biosynthesis. Transfers and isomerizes the ribose moiety from AdoMet to the 7-aminomethyl group of 7-deazaguanine (preQ1-tRNA) to give epoxyqueuosine (oQ-tRNA). This Rickettsia bellii (strain RML369-C) protein is S-adenosylmethionine:tRNA ribosyltransferase-isomerase.